The sequence spans 330 residues: 5'-AMP-activated protein kinase subunit gamma-1 (330 aa).

Low complexity predominate over residues 1–12; it reads MESVAAESAPAP. Positions 1–25 are disordered; the sequence is MESVAAESAPAPENEHSQETPESNS. CBS domains lie at 42–102, 124–186, and 197–259; these read PTSS…KSAL, SFKP…PKPE, and IGTY…NLDV. Residues Arg-69, 84–89, Val-129, 150–151, and Lys-169 each bind ADP; these read MLTITD and HR. Residues Arg-69, 84-89, Val-129, His-150, 150-151, Lys-169, Thr-199, Ala-204, 225-226, and 241-244 each bind AMP; these read MLTITD, HR, SA, and SKFD. Residues Arg-69, 84-89, Val-129, 150-151, Arg-151, and Lys-169 contribute to the ATP site; these read MLTITD and HR. The short motif at 137 to 158 is the AMPK pseudosubstrate element; it reads LFDAVSSLIRNKIHRLPVIDPE. 241 to 244 is a binding site for ADP; it reads SKFD. Residue 241-244 participates in ATP binding; sequence SKFD. Ser-260 bears the Phosphoserine; by ULK1 mark. Residue Thr-262 is modified to Phosphothreonine; by ULK1. Residue Arg-268 coordinates ADP. Arg-268 is an AMP binding site. Arg-268 contributes to the ATP binding site. The residue at position 269 (Ser-269) is a Phosphoserine; by ULK1. Residues 271 to 328 form the CBS 4 domain; that stretch reads YFEGVLKCYLHETLEAIINRLVEAEVHRLVVVDEHDVVKGIVSLSDILQALVLTGGEK. ADP-binding positions include Leu-276 and 297–298; that span reads HR. AMP-binding positions include Leu-276, His-297, 297-298, and 313-316; these read HR and SLSD. ATP is bound by residues Leu-276 and 297–298; that span reads HR.

This sequence belongs to the 5'-AMP-activated protein kinase gamma subunit family. In terms of assembly, AMPK is a heterotrimer of an alpha catalytic subunit (PRKAA1 or PRKAA2), a beta (PRKAB1 or PRKAB2) and a gamma non-catalytic subunits (PRKAG1, PRKAG2 or PRKAG3). Interacts with FNIP1 and FNIP2. Post-translationally, phosphorylated by ULK1 and ULK2; leading to negatively regulate AMPK activity and suggesting the existence of a regulatory feedback loop between ULK1, ULK2 and AMPK. There is some ambiguity for a phosphosite: Ser-260/Thr-262. Glycosylated; O-GlcNAcylated by OGT, promoting the AMP-activated protein kinase (AMPK) activity. Highly expressed in heart and brain, also found in kidney, white adipose tissue, lung and spleen.

Its function is as follows. AMP/ATP-binding subunit of AMP-activated protein kinase (AMPK), an energy sensor protein kinase that plays a key role in regulating cellular energy metabolism. In response to reduction of intracellular ATP levels, AMPK activates energy-producing pathways and inhibits energy-consuming processes: inhibits protein, carbohydrate and lipid biosynthesis, as well as cell growth and proliferation. AMPK acts via direct phosphorylation of metabolic enzymes, and by longer-term effects via phosphorylation of transcription regulators. Also acts as a regulator of cellular polarity by remodeling the actin cytoskeleton; probably by indirectly activating myosin. Gamma non-catalytic subunit mediates binding to AMP, ADP and ATP, leading to activate or inhibit AMPK: AMP-binding results in allosteric activation of alpha catalytic subunit (PRKAA1 or PRKAA2) both by inducing phosphorylation and preventing dephosphorylation of catalytic subunits. ADP also stimulates phosphorylation, without stimulating already phosphorylated catalytic subunit. ATP promotes dephosphorylation of catalytic subunit, rendering the AMPK enzyme inactive. The polypeptide is 5'-AMP-activated protein kinase subunit gamma-1 (Prkag1) (Rattus norvegicus (Rat)).